The chain runs to 91 residues: MTRSAKKGPFCDAHLLKKVEVASSGKDKKPIKTWSRRSTILPEFIGLTIAVHNGRQHVPVYVTENMVGHKLGEFAITRTFKGHAADKKAKR.

The protein belongs to the universal ribosomal protein uS19 family.

In terms of biological role, protein S19 forms a complex with S13 that binds strongly to the 16S ribosomal RNA. This is Small ribosomal subunit protein uS19 from Cupriavidus necator (strain ATCC 17699 / DSM 428 / KCTC 22496 / NCIMB 10442 / H16 / Stanier 337) (Ralstonia eutropha).